Consider the following 852-residue polypeptide: Aconitate hydratase B (852 aa).

Substrate is bound by residues Arg-194, 237-239 (SSR), 405-407 (QDT), and Ser-489. Residues Cys-708, Cys-766, and Cys-769 each contribute to the [4Fe-4S] cluster site. Residues Arg-788 and Arg-793 each coordinate substrate.

The protein belongs to the aconitase/IPM isomerase family. In terms of assembly, monomer. Requires [4Fe-4S] cluster as cofactor.

It catalyses the reaction citrate = D-threo-isocitrate. The catalysed reaction is (2S,3R)-3-hydroxybutane-1,2,3-tricarboxylate = 2-methyl-cis-aconitate + H2O. Its pathway is carbohydrate metabolism; tricarboxylic acid cycle; isocitrate from oxaloacetate: step 2/2. It functions in the pathway organic acid metabolism; propanoate degradation. In terms of biological role, involved in the catabolism of short chain fatty acids (SCFA) via the tricarboxylic acid (TCA)(acetyl degradation route) and probably via the 2-methylcitrate cycle I (propionate degradation route). Catalyzes the reversible isomerization of citrate to isocitrate via cis-aconitate. Catalyzes the hydration of 2-methyl-cis-aconitate to yield (2R,3S)-2-methylisocitrate. The apo form of AcnB functions as a RNA-binding regulatory protein. The polypeptide is Aconitate hydratase B (acnB) (Helicobacter pylori (strain J99 / ATCC 700824) (Campylobacter pylori J99)).